Consider the following 1056-residue polypeptide: Carbamoyl phosphate synthase large chain (1056 aa).

The interval 1–401 (MPKRTDIHKI…ALHKAVRSLE (401 aa)) is carboxyphosphate synthetic domain. The ATP site is built by Arg-129, Arg-169, Gly-175, Gly-176, Lys-208, Ile-210, Glu-215, Gly-241, Ile-242, His-243, Gln-284, and Glu-298. In terms of domain architecture, ATP-grasp 1 spans 133–327 (KELMNELGEP…IAKMAAKIAV (195 aa)). Positions 284, 298, and 300 each coordinate Mg(2+). Mn(2+) contacts are provided by Gln-284, Glu-298, and Asn-300. The interval 402–546 (IDEKDLFSAE…YSAYDHENES (145 aa)) is oligomerization domain. The segment at 547–929 (QRTKKPSILV…ALHKAFSGAH (383 aa)) is carbamoyl phosphate synthetic domain. One can recognise an ATP-grasp 2 domain in the interval 671–861 (DQVITDLNLK…MAQVATRVIL (191 aa)). ATP is bound by residues Arg-707, Ala-746, Leu-748, Glu-752, Gly-777, Val-778, His-779, Ser-780, Gln-820, and Glu-832. Residues Gln-820, Glu-832, and Asn-834 each contribute to the Mg(2+) site. Positions 820, 832, and 834 each coordinate Mn(2+). Residues 930-1056 (IQVPNDGKIL…DQSLEAITIK (127 aa)) enclose the MGS-like domain. Positions 930-1056 (IQVPNDGKIL…DQSLEAITIK (127 aa)) are allosteric domain.

The protein belongs to the CarB family. Composed of two chains; the small (or glutamine) chain promotes the hydrolysis of glutamine to ammonia, which is used by the large (or ammonia) chain to synthesize carbamoyl phosphate. Tetramer of heterodimers (alpha,beta)4. Mg(2+) serves as cofactor. Mn(2+) is required as a cofactor.

The catalysed reaction is hydrogencarbonate + L-glutamine + 2 ATP + H2O = carbamoyl phosphate + L-glutamate + 2 ADP + phosphate + 2 H(+). It carries out the reaction hydrogencarbonate + NH4(+) + 2 ATP = carbamoyl phosphate + 2 ADP + phosphate + 2 H(+). It functions in the pathway amino-acid biosynthesis; L-arginine biosynthesis; carbamoyl phosphate from bicarbonate: step 1/1. The protein operates within pyrimidine metabolism; UMP biosynthesis via de novo pathway; (S)-dihydroorotate from bicarbonate: step 1/3. In terms of biological role, large subunit of the glutamine-dependent carbamoyl phosphate synthetase (CPSase). CPSase catalyzes the formation of carbamoyl phosphate from the ammonia moiety of glutamine, carbonate, and phosphate donated by ATP, constituting the first step of 2 biosynthetic pathways, one leading to arginine and/or urea and the other to pyrimidine nucleotides. The large subunit (synthetase) binds the substrates ammonia (free or transferred from glutamine from the small subunit), hydrogencarbonate and ATP and carries out an ATP-coupled ligase reaction, activating hydrogencarbonate by forming carboxy phosphate which reacts with ammonia to form carbamoyl phosphate. This chain is Carbamoyl phosphate synthase large chain, found in Limosilactobacillus reuteri (strain DSM 20016) (Lactobacillus reuteri).